A 78-amino-acid polypeptide reads, in one-letter code: Protein SlyX homolog (78 aa).

Belongs to the SlyX family.

The chain is Protein SlyX homolog from Xanthomonas oryzae pv. oryzae (strain MAFF 311018).